The primary structure comprises 349 residues: N-formyl peptide receptor 3 (349 aa).

The Extracellular segment spans residues 1–27 (METNFSIPLNETEEVLPEPAGHTVLWI). Residues asparagine 4 and asparagine 10 are each glycosylated (N-linked (GlcNAc...) asparagine). Residues 28–50 (FSLLVHGVTFIFGVLGNGLVIWV) traverse the membrane as a helical segment. Topologically, residues 51–61 (AGFRMTRTVNT) are cytoplasmic. A helical membrane pass occupies residues 62 to 83 (ICYLNLALADFSFSAILPFHMV). At 84–100 (SVAMREKWPFGTFLCKL) the chain is on the extracellular side. A disulfide bond links cysteine 98 and cysteine 176. A helical membrane pass occupies residues 101-121 (VHVMIDINLFVSVYLITIIAL). At 122–140 (DRCICVLHPAWAQNHRTMS) the chain is on the cytoplasmic side. The chain crosses the membrane as a helical span at residues 141–162 (LAKRVMTGLWILTIVLTLPNFI). Topologically, residues 163–205 (FWTTISTTNGDTYCIFNYPFWGDTVVERMNVFITMAKVSLILH) are extracellular. A helical transmembrane segment spans residues 206 to 226 (FIIGFSIPMSIITVCYGIIVA). The Cytoplasmic portion of the chain corresponds to 227–242 (KIHKKRMTKSSRPLHI). A helical membrane pass occupies residues 243–266 (FTAVVASFFICWFPYELTGILMAV). The Extracellular segment spans residues 267–286 (WLKEILLNGKYKIILVLINP). Residues 287–306 (TSSLAFFNSCLNPSLYVFMG) traverse the membrane as a helical segment. The Cytoplasmic segment spans residues 307 to 349 (HNFQERLIRSLPTSLERALTEVPDSAQTSNTHTTSASPPEETE). The segment at 327–349 (EVPDSAQTSNTHTTSASPPEETE) is disordered. Positions 331-343 (SAQTSNTHTTSAS) are enriched in polar residues.

It belongs to the G-protein coupled receptor 1 family.

It is found in the cell membrane. Its function is as follows. Low affinity receptor for N-formyl-methionyl peptides, which are powerful neutrophils chemotactic factors. Binding of FMLP to the receptor causes activation of neutrophils. This response is mediated via a G-protein that activates a phosphatidylinositol-calcium second messenger system. This Macaca mulatta (Rhesus macaque) protein is N-formyl peptide receptor 3 (FPR3).